The sequence spans 341 residues: Protein-glutamate methylesterase/protein-glutamine glutaminase 1 (341 aa).

The 118-residue stretch at 2–119 folds into the Response regulatory domain; sequence KVGIVNDSAL…SDAKLTAGPL (118 aa). Residue Asp-53 is modified to 4-aspartylphosphate. A CheB-type methylesterase domain is found at 146-331; that stretch reads TLAASRLVAI…LTAIAPRLVQ (186 aa). Active-site residues include Ser-158, His-185, and Asp-278.

This sequence belongs to the CheB family. Phosphorylated by CheA. Phosphorylation of the N-terminal regulatory domain activates the methylesterase activity.

Its subcellular location is the cytoplasm. It carries out the reaction [protein]-L-glutamate 5-O-methyl ester + H2O = L-glutamyl-[protein] + methanol + H(+). The enzyme catalyses L-glutaminyl-[protein] + H2O = L-glutamyl-[protein] + NH4(+). Functionally, involved in chemotaxis. Part of a chemotaxis signal transduction system that modulates chemotaxis in response to various stimuli. Catalyzes the demethylation of specific methylglutamate residues introduced into the chemoreceptors (methyl-accepting chemotaxis proteins or MCP) by CheR. Also mediates the irreversible deamidation of specific glutamine residues to glutamic acid. The sequence is that of Protein-glutamate methylesterase/protein-glutamine glutaminase 1 from Cupriavidus pinatubonensis (strain JMP 134 / LMG 1197) (Cupriavidus necator (strain JMP 134)).